A 374-amino-acid chain; its full sequence is UPF0674 endoplasmic reticulum membrane protein C2G5.01 (374 aa).

Residues 49-68 (FRLEFVILACFFLYVFSFIT) form a helical membrane-spanning segment. N-linked (GlcNAc...) asparagine glycosylation occurs at Asn-287. Residues 335–374 (KAAKKKVKSSGDISKLSESDQKKRMERERQRKMRRRAKKM) are disordered. Basic and acidic residues predominate over residues 349–363 (KLSESDQKKRMERER). Basic residues predominate over residues 364 to 374 (QRKMRRRAKKM).

This sequence belongs to the UPF0674 family.

The protein resides in the endoplasmic reticulum membrane. This chain is UPF0674 endoplasmic reticulum membrane protein C2G5.01, found in Schizosaccharomyces pombe (strain 972 / ATCC 24843) (Fission yeast).